Here is a 256-residue protein sequence, read N- to C-terminus: Protein FixA (256 aa).

This sequence belongs to the ETF beta-subunit/FixA family. In terms of assembly, heterodimer of FixA and FixB.

Its pathway is amine and polyamine metabolism; carnitine metabolism. Required for anaerobic carnitine reduction. May bring reductant to CaiA. The chain is Protein FixA from Escherichia coli O81 (strain ED1a).